The sequence spans 2799 residues: Peramine synthetase ppzA (2799 aa).

An adenylation 1 region spans residues 270 to 666; it reads QERCRLQPNA…VGRKDTQVKI (397 aa). A Carrier 1 domain is found at 799-875; it reads QPLTGMERLL…DLSRQSRYIE (77 aa). An O-(pantetheine 4'-phosphoryl)serine modification is found at Ser-836. The tract at residues 914–1327 is condensation; sequence DAYPCTPLQE…ITILTTEDLE (414 aa). Residues 1350–1743 form an adenylation 2 region; that stretch reads DKVQARPNAP…TLSFVRRKDT (394 aa). A methylation (Met) domain region spans residues 1874 to 1970; sequence LEIGCGSGMM…EYLVKLIQDI (97 aa). The 79-residue stretch at 2290–2368 folds into the Carrier 2 domain; it reads SPTTDMEKEL…RLLLDCCCDD (79 aa). Ser-2327 is subject to O-(pantetheine 4'-phosphoryl)serine. The segment at 2420 to 2737 is thiesterase (TE) domain; the sequence is TVLLTGANGF…LADMLQDLED (318 aa).

This sequence belongs to the NRP synthetase family. Pantetheine 4'-phosphate is required as a cofactor.

The enzyme catalyses (S)-1-pyrroline-5-carboxylate + L-arginine + S-adenosyl-L-methionine + 2 ATP = peramine + 2 AMP + S-adenosyl-L-homocysteine + 2 diphosphate + H2O + 2 H(+). The protein operates within secondary metabolite biosynthesis. Functionally, nonribosomal peptide synthetase; part of the gene cluster that mediates the biosynthesis of pyrrolopyrazines, secondary metabolites showing insecticidal activity. The single multifunctional NRPS ppzA is responsible for the biosynthesis of peramine. The condensation domain of ppzA is proposed to catalyze formation of a peptide bond between 1-pyrroline-5-carboxylate and arginine. The methylation domain of ppzA would catalyze the N-methylation of the alpha-amino group of arginine. The reductase domain is proposed to be responsible for reduction of the thioester and the cyclization to form an iminium ion resulting in release from the peptide synthetase. Deprotonation of this intermediate and oxidation of the pyrroline ring would give rise to peramine. This final oxidation to give the pyrrole functionality may be spontaneous. In Epichloe species that produce only peramine, the peramine synthetase gene is not localized in a gene cluster, in contrast to Metarhizium species that contain additional pyrrolopyrazine biosynthesis genes. The 2-oxoglutarate-Fe(II) type oxidoreductase ppzC hydroxylates peramine to yield the newly identified compound 8-hydroxyperamine whereas ppzD converts L-proline into trans-4-hydroxy-L-proline, a precursor of peramine biosynthesis. The protein is Peramine synthetase ppzA of Metarhizium majus (strain ARSEF 297).